Here is a 361-residue protein sequence, read N- to C-terminus: Holliday junction branch migration complex subunit RuvB (361 aa).

Residues 1–12 (MNWDETGPETDE) show a composition bias toward acidic residues. Positions 1–21 (MNWDETGPETDEPTGPVLDDR) are disordered. Residues 13–199 (PTGPVLDDRL…FGFTGHMEFY (187 aa)) are large ATPase domain (RuvB-L). ATP is bound by residues Leu38, Arg39, Gly80, Lys83, Thr84, Thr85, 146–148 (EDF), Arg189, Tyr199, and Arg236. Position 84 (Thr84) interacts with Mg(2+). The tract at residues 200–270 (APAELERVLH…IAMAALKVYE (71 aa)) is small ATPAse domain (RuvB-S). Residues 273 to 361 (ARGLDRLDRA…AKGQQGLFGA (89 aa)) form a head domain (RuvB-H) region. The DNA site is built by Arg309, Arg328, and Arg333.

Belongs to the RuvB family. Homohexamer. Forms an RuvA(8)-RuvB(12)-Holliday junction (HJ) complex. HJ DNA is sandwiched between 2 RuvA tetramers; dsDNA enters through RuvA and exits via RuvB. An RuvB hexamer assembles on each DNA strand where it exits the tetramer. Each RuvB hexamer is contacted by two RuvA subunits (via domain III) on 2 adjacent RuvB subunits; this complex drives branch migration. In the full resolvosome a probable DNA-RuvA(4)-RuvB(12)-RuvC(2) complex forms which resolves the HJ.

The protein localises to the cytoplasm. It carries out the reaction ATP + H2O = ADP + phosphate + H(+). The RuvA-RuvB-RuvC complex processes Holliday junction (HJ) DNA during genetic recombination and DNA repair, while the RuvA-RuvB complex plays an important role in the rescue of blocked DNA replication forks via replication fork reversal (RFR). RuvA specifically binds to HJ cruciform DNA, conferring on it an open structure. The RuvB hexamer acts as an ATP-dependent pump, pulling dsDNA into and through the RuvAB complex. RuvB forms 2 homohexamers on either side of HJ DNA bound by 1 or 2 RuvA tetramers; 4 subunits per hexamer contact DNA at a time. Coordinated motions by a converter formed by DNA-disengaged RuvB subunits stimulates ATP hydrolysis and nucleotide exchange. Immobilization of the converter enables RuvB to convert the ATP-contained energy into a lever motion, pulling 2 nucleotides of DNA out of the RuvA tetramer per ATP hydrolyzed, thus driving DNA branch migration. The RuvB motors rotate together with the DNA substrate, which together with the progressing nucleotide cycle form the mechanistic basis for DNA recombination by continuous HJ branch migration. Branch migration allows RuvC to scan DNA until it finds its consensus sequence, where it cleaves and resolves cruciform DNA. The protein is Holliday junction branch migration complex subunit RuvB of Streptomyces griseus subsp. griseus (strain JCM 4626 / CBS 651.72 / NBRC 13350 / KCC S-0626 / ISP 5235).